The following is a 462-amino-acid chain: MYKEYSDLKDKRILVVGLGKTGVSLAHFLTKHGAQVTVTDHKSKPELSVQLEQLGELPIKFELGGHSPKTFIAQDLVILSPGVPSNLKIFDYARSQGIKITGEFEFSAGFIKEPIIGLTGTNGKTTVAKITEAILTESGVKTWVGGANEKPLVDYLRLDDKAQVVIAEVSSFMLEHCDTFNPGNIVFTNLAENHLDRYRSMEEYVNAKRRIFKNTNQATTSILNADDNAVVELARDPAVQRGRIFYFSRKPALEPQIMNIGGAVNIGDEIRVRTGPEIESFNIKGMKMRGKHSVENIMAAILASREHGATREAVQKVINTFTGLPHRIEYVRKVGGVMFYNDSKATNVHAVLRALDTFDENVILIAGGKDTNLNYEPLRTSVKRKVKTLILVGEAKERINRDLGDFSETFLIGTFEEAVLIAYQKSRIGDVVLLSPGCSSFDMFDSFEERGDYFKEIVRKFH.

Residue 120–126 (GTNGKTT) participates in ATP binding.

It belongs to the MurCDEF family.

The protein localises to the cytoplasm. The enzyme catalyses UDP-N-acetyl-alpha-D-muramoyl-L-alanine + D-glutamate + ATP = UDP-N-acetyl-alpha-D-muramoyl-L-alanyl-D-glutamate + ADP + phosphate + H(+). Its pathway is cell wall biogenesis; peptidoglycan biosynthesis. Functionally, cell wall formation. Catalyzes the addition of glutamate to the nucleotide precursor UDP-N-acetylmuramoyl-L-alanine (UMA). This chain is UDP-N-acetylmuramoylalanine--D-glutamate ligase, found in Bdellovibrio bacteriovorus (strain ATCC 15356 / DSM 50701 / NCIMB 9529 / HD100).